The following is a 158-amino-acid chain: NAD(P)H-quinone oxidoreductase subunit J, chloroplastic (158 aa).

This sequence belongs to the complex I 30 kDa subunit family. As to quaternary structure, NDH is composed of at least 16 different subunits, 5 of which are encoded in the nucleus.

Its subcellular location is the plastid. The protein resides in the chloroplast thylakoid membrane. The catalysed reaction is a plastoquinone + NADH + (n+1) H(+)(in) = a plastoquinol + NAD(+) + n H(+)(out). The enzyme catalyses a plastoquinone + NADPH + (n+1) H(+)(in) = a plastoquinol + NADP(+) + n H(+)(out). Functionally, NDH shuttles electrons from NAD(P)H:plastoquinone, via FMN and iron-sulfur (Fe-S) centers, to quinones in the photosynthetic chain and possibly in a chloroplast respiratory chain. The immediate electron acceptor for the enzyme in this species is believed to be plastoquinone. Couples the redox reaction to proton translocation, and thus conserves the redox energy in a proton gradient. This is NAD(P)H-quinone oxidoreductase subunit J, chloroplastic from Cicer arietinum (Chickpea).